Consider the following 251-residue polypeptide: Small ribosomal subunit protein uS2 (251 aa).

The protein belongs to the universal ribosomal protein uS2 family.

The protein is Small ribosomal subunit protein uS2 of Aromatoleum aromaticum (strain DSM 19018 / LMG 30748 / EbN1) (Azoarcus sp. (strain EbN1)).